Consider the following 49-residue polypeptide: MAKRKANHVIPGMNAAKAQGMGAGYNEEFSNEPLTEAQRQNNKKRKKNQ.

Residues 24–49 (GYNEEFSNEPLTEAQRQNNKKRKKNQ) are disordered.

The protein belongs to the SspO family.

Its subcellular location is the spore core. This is Small, acid-soluble spore protein O from Geobacillus kaustophilus (strain HTA426).